The sequence spans 239 residues: Small ribosomal subunit protein uS3c (239 aa).

Positions 43–139 (IKNYIQKNRK…RLNIGIEKVK (97 aa)) constitute a KH type-2 domain.

It belongs to the universal ribosomal protein uS3 family. In terms of assembly, part of the 30S ribosomal subunit.

It is found in the plastid. The protein resides in the chloroplast. This chain is Small ribosomal subunit protein uS3c (rps3), found in Oryza nivara (Indian wild rice).